A 406-amino-acid chain; its full sequence is MSGCPFAGNSVGYTLKNVSMEDNEEDRAQTGVNRASKGGLIYGNYLQLEKILNAQELQSEVKGNKIHDEHLFIITHQAYELWFKQILWELDSVREIFQNGHVRDERNMLKVIARMHRVVVIFKLLVQQFSVLETMTALDFNDFREYLSPASGFQSLQFRLLENKIGVLQSLRVPYNRKHYRDNFGGDYNELLLKSEQEQTLLQLVEAWLERTPGLEPNGFNFWGKFEKNILKGLEEEFLRIQAKTDSEEKEEQMAEFRKQKEVLLCLFDEKRHDYLLSKGERRLSYRALQGALMIYFYREEPRFQVPFQLLTSLMDIDTLMTKWRYNHVCMVHRMLGTKAGTGGSSGYHYLRSTVSDRYKVFVDLFNLSTYLVPRHWVPKMNPIIHKFLYTAEYSDSSYFSSDESD.

Phosphoserine is present on S19. Substrate is bound by residues 72–76 (FIITH) and R144. H328 lines the heme pocket. T342 provides a ligand contact to substrate.

The protein belongs to the tryptophan 2,3-dioxygenase family. Homotetramer. Dimer of dimers. Requires heme as cofactor.

It catalyses the reaction L-tryptophan + O2 = N-formyl-L-kynurenine. It functions in the pathway amino-acid degradation; L-tryptophan degradation via kynurenine pathway; L-kynurenine from L-tryptophan: step 1/2. Its function is as follows. Heme-dependent dioxygenase that catalyzes the oxidative cleavage of the L-tryptophan (L-Trp) pyrrole ring and converts L-tryptophan to N-formyl-L-kynurenine. Catalyzes the oxidative cleavage of the indole moiety. This is Tryptophan 2,3-dioxygenase from Mus musculus (Mouse).